The sequence spans 821 residues: MGSNLPAQPNLRVTIIAADGLYKRDVFRFPDPFAVATVGGEQTHTTSVIKKTLNPYWNEMFDLRVNEDSILAIQIFDQKKFKKKDQGFLGVINVRIGDVIDLQMGGDEMLTRDLKKSNDNLVVHGKLIINLSTNLSTPIPNQANGLHRSHAQSSTSSGLVPQVSSASHPSVSPGQAEPSAAASNVSLHPQRVPSTTRPTSTVGPVNGGPAPPPNGPQGSRTNLSSFEDSQGRLPAGWERREDNLGRTYYVDHNTRTTTWTRPSSNYNEQTQRTQREANMQLERRAHQSRMLPEDRTGANSPNLQESPQPQPQQAHTPPAGGSASAVSMMATGATTAGTGELPPGWEQRTTPEGRPYFVDHNTRTTTWVDPRRQQYIRMYGHNANGGNTTIQQQPVSQLGPLPSGWEMRLTNTARVYFVDHNTKTTTWDDPRLPSSLDQGVPQYKRDFRRKLIYFRSQPALRIMSGQCHVKVRRNNIFEDSYAEIMRQSASDLKKRLMIKFDGEDGLDYGGLSREFFFLLSHEMFNPFYCLFEYSAHDNYTLQINPHSGVNPEHLNYFKFIGRVVGLAIFHRRFLDSFFIGAFYKMMLRKKVSLQDMEGVDEDLHRNLAWTLENDIEGIIELTFSVDDEKFGERTTIDLKPGGRDIPVTNENKGEYVELVTEWKIVKRVEEQFNAFMSGFNELIPADLVNVFDERELELLIGGIADIDVDDWKKHTDYRGYQEQDEVIQNFWKIVRTWDAEQKSRLLQFTTGTSRIPVNGFKDLQGSDGPRRFTIEKSGDPIALPKSHTCFNRLDLPPYKTHDVLEHKLSIAVEETLGFGQE.

The C2 domain maps to 1 to 112; sequence MGSNLPAQPN…QMGGDEMLTR (112 aa). Disordered regions lie at residues 140-240 and 255-359; these read PNQA…WERR and RTTT…YFVD. Polar residues-rich tracts occupy residues 151–173, 181–201, 217–228, and 255–272; these read AQSSTSSGLVPQVSSASHPSVSP, AASNVSLHPQRVPSTTRPTST, QGSRTNLSSFED, and RTTTWTRPSSNYNEQTQR. Positions 231–264 constitute a WW 1 domain; the sequence is GRLPAGWERREDNLGRTYYVDHNTRTTTWTRPSS. The span at 281–296 shows a compositional bias: basic and acidic residues; that stretch reads LERRAHQSRMLPEDRT. The segment covering 297 to 306 has biased composition (polar residues); it reads GANSPNLQES. Residues 311-339 are compositionally biased toward low complexity; it reads PQQAHTPPAGGSASAVSMMATGATTAGTG. WW domains are found at residues 339–372 and 399–432; these read GELPPGWEQRTTPEGRPYFVDHNTRTTTWVDPRR and GPLPSGWEMRLTNTARVYFVDHNTKTTTWDDPRL. Residues 488-821 enclose the HECT domain; sequence SASDLKKRLM…VEETLGFGQE (334 aa). The active-site Glycyl thioester intermediate is the cysteine 789.

The protein belongs to the RSP5/NEDD4 family. Interacts with creD.

It localises to the cytoplasm. The catalysed reaction is S-ubiquitinyl-[E2 ubiquitin-conjugating enzyme]-L-cysteine + [acceptor protein]-L-lysine = [E2 ubiquitin-conjugating enzyme]-L-cysteine + N(6)-ubiquitinyl-[acceptor protein]-L-lysine.. It functions in the pathway protein modification; protein ubiquitination. E3 ubiquitin-protein ligase which accepts ubiquitin from an E2 ubiquitin-conjugating enzyme in the form of a thioester and then directly transfers the ubiquitin to targeted substrates. Probably involved in the regulatory network controlling carbon source utilization. This chain is Probable E3 ubiquitin-protein ligase hulA (hulA), found in Aspergillus niger (strain ATCC MYA-4892 / CBS 513.88 / FGSC A1513).